Here is a 41-residue protein sequence, read N- to C-terminus: Photosystem II reaction center protein X (41 aa).

Over threonine 2–serine 6 the chain is Lumenal. Residues leucine 7–isoleucine 29 form a helical membrane-spanning segment. Residues alanine 30 to leucine 41 lie on the Cytoplasmic side of the membrane.

It belongs to the PsbX family. Type 1 subfamily. PSII is composed of 1 copy each of membrane proteins PsbA, PsbB, PsbC, PsbD, PsbE, PsbF, PsbH, PsbI, PsbJ, PsbK, PsbL, PsbM, PsbT, PsbX, PsbY, PsbZ, Psb30/Ycf12, peripheral proteins PsbO, CyanoQ (PsbQ), PsbU, PsbV and a large number of cofactors. It forms dimeric complexes. Part of a photosystem II (PSII) assembly intermediate complex PSII-I; crystallized from a strain deleted of psbJ, it forms monomeric PSII before addition of the oxygen evolving complex. PSII-I includes 3 assembly factors not found in mature PSII (Psb27, Psb28 and Psb34). PSII binds multiple chlorophylls, carotenoids and specific lipids. is required as a cofactor.

The protein resides in the cellular thylakoid membrane. Its function is as follows. Involved in the binding and/or turnover of quinones at the Q(B) site of photosystem II (PSII). PSII is a light-driven water plastoquinone oxidoreductase, using light energy to abstract electrons from H(2)O, generating a proton gradient subsequently used for ATP formation. This chain is Photosystem II reaction center protein X, found in Thermosynechococcus vestitus (strain NIES-2133 / IAM M-273 / BP-1).